The sequence spans 30 residues: Cliotide T19 (30 aa).

The cyclopeptide (Gly-Asn) cross-link spans 1-30 (GSVIKCGESCLLGKCYTPGCTCSRPICKKN). Intrachain disulfides connect Cys-6-Cys-20, Cys-10-Cys-22, and Cys-15-Cys-27.

In terms of processing, contains 3 disulfide bonds. Post-translationally, this is a cyclic peptide. Expressed in root nodules but not in seed.

Its function is as follows. Probably participates in a plant defense mechanism. Active against Gram-negative bacterium E.coli ATCC 700926 (MIC=0.6 uM) under low-salt conditions. Not active against Gram-positive bacterium S.aureus ATCC 12600 up to a concentration of 100 uM under low-salt conditions. Exhibits immunomodulatory activity but no cytotoxicity in vitro. The sequence is that of Cliotide T19 from Clitoria ternatea (Butterfly pea).